The primary structure comprises 219 residues: Thymidylate kinase (219 aa).

9–16 (GIEGCGKT) serves as a coordination point for ATP.

This sequence belongs to the thymidylate kinase family.

It carries out the reaction dTMP + ATP = dTDP + ADP. Its function is as follows. Phosphorylation of dTMP to form dTDP in both de novo and salvage pathways of dTTP synthesis. This Syntrophus aciditrophicus (strain SB) protein is Thymidylate kinase.